A 158-amino-acid chain; its full sequence is Endoribonuclease YbeY (158 aa).

Residues His119, His123, and His129 each coordinate Zn(2+).

It belongs to the endoribonuclease YbeY family. It depends on Zn(2+) as a cofactor.

It localises to the cytoplasm. Functionally, single strand-specific metallo-endoribonuclease involved in late-stage 70S ribosome quality control and in maturation of the 3' terminus of the 16S rRNA. In Acinetobacter baumannii (strain SDF), this protein is Endoribonuclease YbeY.